Here is a 190-residue protein sequence, read N- to C-terminus: Cytoglobin (190 aa).

One can recognise a Globin domain in the interval 18 to 167; it reads ELSEAERKAV…IYSHVTAAYK (150 aa). The cysteines at positions 38 and 83 are disulfide-linked. Heme b contacts are provided by His81 and His113.

It belongs to the globin family. Monomeric. Homodimer; disulfide-linked in vitro. Also homooligomeric in vitro. The formation of an intramolecular disulfide bond between cysteines Cys-38 and Cys-83 specifically enhances the nitrite reductase activity. In terms of tissue distribution, widely expressed. Highest expression in heart, stomach, bladder and small intestine.

It localises to the cytoplasm. The protein localises to the nucleus. It carries out the reaction Fe(II)-heme b-[protein] + nitric oxide + O2 = Fe(III)-heme b-[protein] + nitrate. The catalysed reaction is Fe(III)-heme b-[protein] + nitric oxide + H2O = Fe(II)-heme b-[protein] + nitrite + 2 H(+). It catalyses the reaction 2 superoxide + 2 H(+) = H2O2 + O2. The enzyme catalyses H2O2 + AH2 = A + 2 H2O. Its activity is regulated as follows. The nitric oxide dioxygenase activity is activated by a reducing system composed of cytochrome b5, its upstream reductase CYB5R3 and NADH. Probable multifunctional globin with a hexacoordinated heme iron required for the catalysis of various reactions depending on redox condition of the cell as well as oxygen availability. Has a nitric oxide dioxygenase (NOD) activity and is most probably involved in cell-mediated and oxygen-dependent nitric oxide consumption. By scavenging this second messenger may regulate several biological processes including endothelium-mediated vasodilation and vascular tone. Under normoxic conditions functions as a nitric oxide dioxygenase (NOD) but under hypoxic conditions the globin may switch its function to that of a nitrite (NO2) reductase (NiR), generating nitric oxide. Could also have peroxidase and superoxide dismutase activities, detoxifying reactive oxygen species and protecting cells against oxidative stress. Also binds dioxygen with low affinity and could function as an oxygen sensor but has probably no function as a respiratory oxygen carrier. The protein is Cytoglobin of Homo sapiens (Human).